Reading from the N-terminus, the 624-residue chain is Leucine-rich repeat and IQ domain-containing protein 3 (624 aa).

LRR repeat units lie at residues 51-72 (SLRVCIFSNNFITDIHPLQSCI), 73-94 (KLIKLDLHGNQIKSLPNTKFWN), and 98-119 (NLKLLYLHDNGFAKLKNICVLS). The LRRCT domain maps to 132–179 (CPVSLKKGYRHVLVNSIWPLKALDHHVISDEEIIQNWHLPERFKACNH). An IQ domain is found at 215–244 (HNSPVLIVQRWIRGFLVRKNLSPVFFHKKK). Positions 553-614 (KQKLKAEKYR…TKVAIVKTNL (62 aa)) form a coiled coil.

This Homo sapiens (Human) protein is Leucine-rich repeat and IQ domain-containing protein 3 (LRRIQ3).